Consider the following 367-residue polypeptide: Probable peptidoglycan glycosyltransferase FtsW (367 aa).

Over 1 to 8 the chain is Cytoplasmic; the sequence is MRRVEGYD. Residues 9–29 form a helical membrane-spanning segment; the sequence is MIVLMMAVILTCFGVVMVYSA. Residues 30–49 are Periplasmic-facing; it reads SSVMAAKKFHDGFFFLKRQS. The chain crosses the membrane as a helical span at residues 50 to 70; sequence LYALIGFIGMGVAMHVDYHVW. The Cytoplasmic portion of the chain corresponds to 71 to 72; that stretch reads KK. A helical membrane pass occupies residues 73-93; it reads WAVPLFLGTFFLLLLVFVPGI. Residues 94–138 lie on the Periplasmic side of the membrane; it reads GGTAKGASRWIRLPGFNFQPSELAKVALIMYMAYSLEKRQDKLKQ. The chain crosses the membrane as a helical span at residues 139 to 159; that stretch reads FMSGFFPYMLILGVFIAVLLA. Over 160-161 the chain is Cytoplasmic; that stretch reads QH. The helical transmembrane segment at 162 to 182 threads the bilayer; the sequence is DMGAALTMLAVAIVMLFAAGT. A topological domain (periplasmic) is located at residue Lys183. A helical membrane pass occupies residues 184 to 204; the sequence is VQYILGMGLVALPGICYLVFT. The Cytoplasmic portion of the chain corresponds to 205–225; it reads KAYRMRRITAFLDPWQDPTDA. The helical transmembrane segment at 226 to 246 threads the bilayer; it reads GFQIIQSWLALGTGGFFGQGL. The Periplasmic portion of the chain corresponds to 247 to 266; it reads GEGKQKLFYLPEAHTDFILS. The helical transmembrane segment at 267-287 threads the bilayer; the sequence is VLGEEMGFIGVVVIASMFLLL. Residues 288–304 are Cytoplasmic-facing; the sequence is VQRSIRVAIAAEDSFGR. A helical membrane pass occupies residues 305–325; it reads FLAFGIAILLGLEAFVNMAVV. Residues 326–335 lie on the Periplasmic side of the membrane; sequence TGLLPTKGIA. A helical membrane pass occupies residues 336-356; sequence LPFLSYGGSSLIISLCSVGVL. The Cytoplasmic portion of the chain corresponds to 357–367; that stretch reads LNVSTRMRGAA.

This sequence belongs to the SEDS family. FtsW subfamily.

Its subcellular location is the cell inner membrane. It carries out the reaction [GlcNAc-(1-&gt;4)-Mur2Ac(oyl-L-Ala-gamma-D-Glu-L-Lys-D-Ala-D-Ala)](n)-di-trans,octa-cis-undecaprenyl diphosphate + beta-D-GlcNAc-(1-&gt;4)-Mur2Ac(oyl-L-Ala-gamma-D-Glu-L-Lys-D-Ala-D-Ala)-di-trans,octa-cis-undecaprenyl diphosphate = [GlcNAc-(1-&gt;4)-Mur2Ac(oyl-L-Ala-gamma-D-Glu-L-Lys-D-Ala-D-Ala)](n+1)-di-trans,octa-cis-undecaprenyl diphosphate + di-trans,octa-cis-undecaprenyl diphosphate + H(+). Its pathway is cell wall biogenesis; peptidoglycan biosynthesis. Functionally, peptidoglycan polymerase that is essential for cell division. In Geobacter sp. (strain M18), this protein is Probable peptidoglycan glycosyltransferase FtsW.